The chain runs to 1020 residues: Probable leucine-rich repeat receptor-like serine/threonine-protein kinase At3g14840 (1020 aa).

A signal peptide spans 1 to 26 (MSLNRQLLFTYYFIVSLILFSDFVSS). The Extracellular portion of the chain corresponds to 27-614 (ATLPKEEVDA…GTGGGSSVGT (588 aa)). N-linked (GlcNAc...) asparagine glycosylation is found at Asn-50 and Asn-81. 10 LRR repeats span residues 86-110 (ICHV…LSGL), 111-134 (PFLQ…WGAS), 136-157 (LLNI…LGNL), 158-181 (TTLS…LGNL), 182-204 (PNLK…TFAK), 206-231 (TTLT…NWKG), 253-276 (LGTL…PLRN), 277-301 (MTSM…LGQN), 302-324 (RKLK…TYSG), and 326-349 (SDVD…MVDQ). Residues Asn-124, Asn-138, and Asn-156 are each glycosylated (N-linked (GlcNAc...) asparagine). N-linked (GlcNAc...) asparagine glycosylation is present at Asn-193. Asn-276 and Asn-289 each carry an N-linked (GlcNAc...) asparagine glycan. N-linked (GlcNAc...) asparagine glycosylation is found at Asn-359, Asn-386, Asn-389, Asn-417, Asn-461, Asn-469, and Asn-498. One copy of the LRR 11 repeat lies at 479–501 (QARLSAISLTYQALCLGKGNYTV). The chain crosses the membrane as a helical span at residues 615 to 635 (VVGSVIASTVFLVLLIGGILW). Residues 636-1020 (WRGCLRPKSQ…LDSAYWNTRT (385 aa)) are Cytoplasmic-facing. Residues 672–949 (FDPANKIGEG…VSMLEGHSTV (278 aa)) enclose the Protein kinase domain. Residues 678 to 686 (IGEGGFGPV) and Lys-700 contribute to the ATP site. Phosphotyrosine is present on Tyr-745. The active-site Proton acceptor is Asp-798. Position 831 is a phosphoserine (Ser-831). 2 positions are modified to phosphothreonine: Thr-832 and Thr-837. A Phosphotyrosine modification is found at Tyr-845.

Belongs to the protein kinase superfamily. Ser/Thr protein kinase family.

It localises to the cell membrane. The catalysed reaction is L-seryl-[protein] + ATP = O-phospho-L-seryl-[protein] + ADP + H(+). It carries out the reaction L-threonyl-[protein] + ATP = O-phospho-L-threonyl-[protein] + ADP + H(+). The chain is Probable leucine-rich repeat receptor-like serine/threonine-protein kinase At3g14840 (LRR-RLK) from Arabidopsis thaliana (Mouse-ear cress).